Here is a 487-residue protein sequence, read N- to C-terminus: Ribosomal protein uS12 methylthiotransferase RimO (487 aa).

The MTTase N-terminal domain maps to 38–149 (PTVAFAHLGC…IVEVLEQVEA (112 aa)). Residues C47, C83, C112, C187, C191, and C194 each contribute to the [4Fe-4S] cluster site. Residues 173-402 (TTSEAVAYLK…MEAQQAISAE (230 aa)) form the Radical SAM core domain. One can recognise a TRAM domain in the interval 405–476 (GAWVGRIVDV…IYDLEGEVVG (72 aa)).

It belongs to the methylthiotransferase family. RimO subfamily. [4Fe-4S] cluster serves as cofactor.

It is found in the cytoplasm. The enzyme catalyses L-aspartate(89)-[ribosomal protein uS12]-hydrogen + (sulfur carrier)-SH + AH2 + 2 S-adenosyl-L-methionine = 3-methylsulfanyl-L-aspartate(89)-[ribosomal protein uS12]-hydrogen + (sulfur carrier)-H + 5'-deoxyadenosine + L-methionine + A + S-adenosyl-L-homocysteine + 2 H(+). In terms of biological role, catalyzes the methylthiolation of an aspartic acid residue of ribosomal protein uS12. The polypeptide is Ribosomal protein uS12 methylthiotransferase RimO (Synechococcus sp. (strain RCC307)).